We begin with the raw amino-acid sequence, 315 residues long: Type II restriction enzyme SalI (315 aa).

It catalyses the reaction Endonucleolytic cleavage of DNA to give specific double-stranded fragments with terminal 5'-phosphates.. Its function is as follows. A P subtype restriction enzyme that recognizes the double-stranded sequence 5'-GTCGAC-3' and cleaves after G-1. The polypeptide is Type II restriction enzyme SalI (Streptomyces albus G).